The following is a 429-amino-acid chain: CinA-like protein (429 aa).

The protein belongs to the CinA family.

This Chlorobium limicola (strain DSM 245 / NBRC 103803 / 6330) protein is CinA-like protein.